Consider the following 378-residue polypeptide: Queuine tRNA-ribosyltransferase (378 aa).

The Proton acceptor role is filled by D91. Substrate is bound by residues D91–F95, D145, Q189, and G216. The interval G247–D253 is RNA binding. The Nucleophile role is filled by D266. An RNA binding; important for wobble base 34 recognition region spans residues T271–R275. Zn(2+) is bound by residues C304, C306, C309, and H335.

Belongs to the queuine tRNA-ribosyltransferase family. In terms of assembly, homodimer. Within each dimer, one monomer is responsible for RNA recognition and catalysis, while the other monomer binds to the replacement base PreQ1. Zn(2+) is required as a cofactor.

The catalysed reaction is 7-aminomethyl-7-carbaguanine + guanosine(34) in tRNA = 7-aminomethyl-7-carbaguanosine(34) in tRNA + guanine. It participates in tRNA modification; tRNA-queuosine biosynthesis. In terms of biological role, catalyzes the base-exchange of a guanine (G) residue with the queuine precursor 7-aminomethyl-7-deazaguanine (PreQ1) at position 34 (anticodon wobble position) in tRNAs with GU(N) anticodons (tRNA-Asp, -Asn, -His and -Tyr). Catalysis occurs through a double-displacement mechanism. The nucleophile active site attacks the C1' of nucleotide 34 to detach the guanine base from the RNA, forming a covalent enzyme-RNA intermediate. The proton acceptor active site deprotonates the incoming PreQ1, allowing a nucleophilic attack on the C1' of the ribose to form the product. After dissociation, two additional enzymatic reactions on the tRNA convert PreQ1 to queuine (Q), resulting in the hypermodified nucleoside queuosine (7-(((4,5-cis-dihydroxy-2-cyclopenten-1-yl)amino)methyl)-7-deazaguanosine). This chain is Queuine tRNA-ribosyltransferase, found in Vibrio vulnificus (strain CMCP6).